The chain runs to 272 residues: 3-methyl-2-oxobutanoate hydroxymethyltransferase (272 aa).

Asp-43 and Asp-82 together coordinate Mg(2+). Residues 43–44 (DS), Asp-82, and Lys-112 contribute to the 3-methyl-2-oxobutanoate site. Glu-114 contributes to the Mg(2+) binding site. Glu-179 functions as the Proton acceptor in the catalytic mechanism.

It belongs to the PanB family. As to quaternary structure, homodecamer; pentamer of dimers. The cofactor is Mg(2+).

It is found in the cytoplasm. The catalysed reaction is 3-methyl-2-oxobutanoate + (6R)-5,10-methylene-5,6,7,8-tetrahydrofolate + H2O = 2-dehydropantoate + (6S)-5,6,7,8-tetrahydrofolate. The protein operates within cofactor biosynthesis; (R)-pantothenate biosynthesis; (R)-pantoate from 3-methyl-2-oxobutanoate: step 1/2. In terms of biological role, catalyzes the reversible reaction in which hydroxymethyl group from 5,10-methylenetetrahydrofolate is transferred onto alpha-ketoisovalerate to form ketopantoate. This chain is 3-methyl-2-oxobutanoate hydroxymethyltransferase, found in Staphylococcus aureus (strain bovine RF122 / ET3-1).